Here is a 152-residue protein sequence, read N- to C-terminus: MSSGGLLLLLGFLTLWAELTPVSGQDPPRFCSLPAETGECRGRIPRFYYNSASKQCEQFFYSGCGGNANNFETKDQCHYTCVEKPGVCPPRPQQQGQEGKNCENDWKCPGQQKCCRYRGKTECKDAVFEKFASTTRTPTSIGSTPVGSSVPT.

The N-terminal stretch at 1–24 (MSSGGLLLLLGFLTLWAELTPVSG) is a signal peptide. At Gln-25 the chain carries Pyrrolidone carboxylic acid. The BPTI/Kunitz inhibitor domain occupies 31–81 (CSLPAETGECRGRIPRFYYNSASKQCEQFFYSGCGGNANNFETKDQCHYTC). Cystine bridges form between Cys-31/Cys-81, Cys-40/Cys-64, Cys-56/Cys-77, Cys-88/Cys-115, Cys-102/Cys-114, and Cys-108/Cys-123. A WAP; atypical domain is found at 81-127 (CVEKPGVCPPRPQQQGQEGKNCENDWKCPGQQKCCRYRGKTECKDAV).

This sequence belongs to the venom Kunitz-type family. Expressed by the venom gland.

Its subcellular location is the secreted. The sequence is that of Fused toxin protein from Sistrurus catenatus edwardsii (Desert massasauga).